Consider the following 445-residue polypeptide: Bifunctional protein GlmU (445 aa).

The pyrophosphorylase stretch occupies residues 1–218 (MRALVLAAGK…LLEITGVNTR (218 aa)). UDP-N-acetyl-alpha-D-glucosamine-binding positions include 6-9 (LAAG), Lys20, Gln69, 74-75 (GT), 96-98 (YGD), Gly134, Glu147, Asn162, and Asn216. A Mg(2+)-binding site is contributed by Asp98. Asn216 serves as a coordination point for Mg(2+). Residues 219–239 (KTLVWLEEQLRMRKIEELLEN) form a linker region. The N-acetyltransferase stretch occupies residues 240–445 (GVTILDPATT…GWVLKKRKEE (206 aa)). UDP-N-acetyl-alpha-D-glucosamine-binding residues include Arg321 and Lys339. His351 (proton acceptor) is an active-site residue. The UDP-N-acetyl-alpha-D-glucosamine site is built by Tyr354 and Asn365. Acetyl-CoA-binding positions include Ala368, 374 to 375 (NY), Ser393, Ala411, and Arg428.

In the N-terminal section; belongs to the N-acetylglucosamine-1-phosphate uridyltransferase family. It in the C-terminal section; belongs to the transferase hexapeptide repeat family. As to quaternary structure, homotrimer. It depends on Mg(2+) as a cofactor.

The protein resides in the cytoplasm. The catalysed reaction is alpha-D-glucosamine 1-phosphate + acetyl-CoA = N-acetyl-alpha-D-glucosamine 1-phosphate + CoA + H(+). The enzyme catalyses N-acetyl-alpha-D-glucosamine 1-phosphate + UTP + H(+) = UDP-N-acetyl-alpha-D-glucosamine + diphosphate. The protein operates within nucleotide-sugar biosynthesis; UDP-N-acetyl-alpha-D-glucosamine biosynthesis; N-acetyl-alpha-D-glucosamine 1-phosphate from alpha-D-glucosamine 6-phosphate (route II): step 2/2. It functions in the pathway nucleotide-sugar biosynthesis; UDP-N-acetyl-alpha-D-glucosamine biosynthesis; UDP-N-acetyl-alpha-D-glucosamine from N-acetyl-alpha-D-glucosamine 1-phosphate: step 1/1. Its pathway is bacterial outer membrane biogenesis; LPS lipid A biosynthesis. In terms of biological role, catalyzes the last two sequential reactions in the de novo biosynthetic pathway for UDP-N-acetylglucosamine (UDP-GlcNAc). The C-terminal domain catalyzes the transfer of acetyl group from acetyl coenzyme A to glucosamine-1-phosphate (GlcN-1-P) to produce N-acetylglucosamine-1-phosphate (GlcNAc-1-P), which is converted into UDP-GlcNAc by the transfer of uridine 5-monophosphate (from uridine 5-triphosphate), a reaction catalyzed by the N-terminal domain. The polypeptide is Bifunctional protein GlmU (Thermotoga maritima (strain ATCC 43589 / DSM 3109 / JCM 10099 / NBRC 100826 / MSB8)).